Here is a 156-residue protein sequence, read N- to C-terminus: 6,7-dimethyl-8-ribityllumazine synthase (156 aa).

Residues phenylalanine 22, 56 to 58 (AME), and 80 to 82 (AVI) contribute to the 5-amino-6-(D-ribitylamino)uracil site. 85 to 86 (ET) is a (2S)-2-hydroxy-3-oxobutyl phosphate binding site. Histidine 88 (proton donor) is an active-site residue. Phenylalanine 113 provides a ligand contact to 5-amino-6-(D-ribitylamino)uracil. Arginine 127 serves as a coordination point for (2S)-2-hydroxy-3-oxobutyl phosphate.

The protein belongs to the DMRL synthase family.

It carries out the reaction (2S)-2-hydroxy-3-oxobutyl phosphate + 5-amino-6-(D-ribitylamino)uracil = 6,7-dimethyl-8-(1-D-ribityl)lumazine + phosphate + 2 H2O + H(+). It functions in the pathway cofactor biosynthesis; riboflavin biosynthesis; riboflavin from 2-hydroxy-3-oxobutyl phosphate and 5-amino-6-(D-ribitylamino)uracil: step 1/2. Functionally, catalyzes the formation of 6,7-dimethyl-8-ribityllumazine by condensation of 5-amino-6-(D-ribitylamino)uracil with 3,4-dihydroxy-2-butanone 4-phosphate. This is the penultimate step in the biosynthesis of riboflavin. This Kosmotoga olearia (strain ATCC BAA-1733 / DSM 21960 / TBF 19.5.1) protein is 6,7-dimethyl-8-ribityllumazine synthase.